The chain runs to 423 residues: MPRSFLVKSKKAHSYHQPRSPGPDYSLRLETVPAPGRAEGGAVSAGESKMEPRERLSPDSQLTEAPDRASASPNSCEGSVCDPCSEFEDFWRPPSPSVSPASEKSLCRSLDEAQPYTLPFKPYAWSGLAGSDLRHLVQSYRQCSALERSAGLSLFCERGSEPGRPAARYGPEQAAGGAGAGQPGRCGVAGGATSAAGLGLYGDFAPAAAGLYERPSTAAGRLYQDHGHELHADKSVGVKVESELLCTRLLLGGGSYKCIKCSKVFSTPHGLEVHVRRSHSGTRPFACEMCGKTFGHAVSLEQHKAVHSQERSFDCKICGKSFKRSSTLSTHLLIHSDTRPYPCQYCGKRFHQKSDMKKHTFIHTGEKPHKCQVCGKAFSQSSNLITHSRKHTGFKPFGCDLCGKGFQRKVDLRRHRETQHGLK.

Positions 1 to 20 are SNAG domain; sequence MPRSFLVKSKKAHSYHQPRS. The segment at 1-76 is disordered; it reads MPRSFLVKSK…DRASASPNSC (76 aa). Residues serine 20 and serine 57 each carry the phosphoserine modification. Positions 48 to 57 are enriched in basic and acidic residues; that stretch reads SKMEPRERLS. The interval 141 to 258 is required for interaction with RELA; it reads RQCSALERSA…LLLGGGSYKC (118 aa). C2H2-type zinc fingers lie at residues 256 to 279, 285 to 307, 313 to 335, 341 to 363, 369 to 391, and 397 to 420; these read YKCI…RRSH, FACE…KAVH, FDCK…LLIH, YPCQ…TFIH, HKCQ…SRKH, and FGCD…ETQH.

In terms of assembly, interacts (via the zinc-finger domain) with ARIH2; the interaction prevents GFI1 ubiquitination and proteasomal degradation. Forms a complex with EHMT2 and HDAC1 to promote 'Lys-9' dimethylation of H3 (H3K9Me2) and repress expression of target genes. Interacts directly with EHMT2. Interacts with RUNX1T1; the interaction represses HDAC-mediated transcriptional activity. Interacts (via the C-terminal zinc fingers) with ZBTB17; the interaction results in the recruitment of GFI1 to the CDKN1A/p21 and CDKNIB promoters and repression of transcription. Interacts with U2AF1L4. Component of RCOR-GFI-KDM1A-HDAC complexes. Interacts directly with RCOR1, KDM1A and HDAC2. Also interacts with HDAC1. Component of the GFI1-AJUBA-HDAC1 repressor complex. Interacts directly with AJUBA (via its LIM domains); the interaction results in the HDAC-dependent corepression of a subset of GFI1 target genes and, occurs independently of the SNAG domain. Interacts with SPI1; the interaction inhibits SPI1 transcriptional activity targeted at macrophage-specific genes, repressing macrophage differentiation of myeloid progenitor cells and promoting granulocyte commitment. Interacts with PIAS3; the interaction relieves the inhibitory effect of PIAS3 on STAT3-mediated transcriptional activity. Interacts with RELA; the interaction occurs on liposaccharide (LPS) stimulation and controls RELA DNA binding activity and regulates endotoxin-mediated TOLL-like receptor inflammatory response. In terms of processing, ubiquitinated.

It localises to the nucleus. Transcription repressor essential for hematopoiesis. Functions in a cell-context and development-specific manner. Binds to 5'-TAAATCAC[AT]GCA-3' in the promoter region of a large number of genes. Component of several complexes, including the EHMT2-GFI1-HDAC1, AJUBA-GFI1-HDAC1 and RCOR-GFI-KDM1A-HDAC complexes, that suppress, via histone deacetylase (HDAC) recruitment, a number of genes implicated in multilineage blood cell development. Regulates neutrophil differentiation, promotes proliferation of lymphoid cells, and is required for granulocyte development. Inhibits SPI1 transcriptional activity at macrophage-specific genes, repressing macrophage differentiation of myeloid progenitor cells and promoting granulocyte commitment. Mediates, together with U2AF1L4, the alternative splicing of CD45 and controls T-cell receptor signaling. Regulates the endotoxin-mediated Toll-like receptor (TLR) inflammatory response by antagonizing RELA. Cooperates with CBFA2T2 to regulate ITGB1-dependent neurite growth. Controls cell-cycle progression by repressing CDKNIA/p21 transcription in response to TGFB1 via recruitment of GFI1 by ZBTB17 to the CDKNIA/p21 and CDKNIB promoters. Required for the maintenance of inner ear hair cells. In addition to its role in transcription, acts as a substrate adapter for PRMT1 in the DNA damage response. Facilitates the recognition of TP53BP1 and MRE11 substrates by PRMT1, promoting their methylation and the DNA damage response. This chain is Zinc finger protein Gfi-1 (Gfi1), found in Mus musculus (Mouse).